The primary structure comprises 333 residues: Transaldolase (333 aa).

Catalysis depends on K136, which acts as the Schiff-base intermediate with substrate.

The protein belongs to the transaldolase family. Type 1 subfamily. In terms of assembly, homodimer.

The protein resides in the cytoplasm. The enzyme catalyses D-sedoheptulose 7-phosphate + D-glyceraldehyde 3-phosphate = D-erythrose 4-phosphate + beta-D-fructose 6-phosphate. Its pathway is carbohydrate degradation; pentose phosphate pathway; D-glyceraldehyde 3-phosphate and beta-D-fructose 6-phosphate from D-ribose 5-phosphate and D-xylulose 5-phosphate (non-oxidative stage): step 2/3. In terms of biological role, transaldolase is important for the balance of metabolites in the pentose-phosphate pathway. The chain is Transaldolase from Acidobacterium capsulatum (strain ATCC 51196 / DSM 11244 / BCRC 80197 / JCM 7670 / NBRC 15755 / NCIMB 13165 / 161).